The primary structure comprises 495 residues: Glycogen synthase (495 aa).

An ADP-alpha-D-glucose-binding site is contributed by K24.

The protein belongs to the glycosyltransferase 1 family. Bacterial/plant glycogen synthase subfamily.

The enzyme catalyses [(1-&gt;4)-alpha-D-glucosyl](n) + ADP-alpha-D-glucose = [(1-&gt;4)-alpha-D-glucosyl](n+1) + ADP + H(+). It participates in glycan biosynthesis; glycogen biosynthesis. Synthesizes alpha-1,4-glucan chains using ADP-glucose. The chain is Glycogen synthase from Nitrosomonas europaea (strain ATCC 19718 / CIP 103999 / KCTC 2705 / NBRC 14298).